Reading from the N-terminus, the 556-residue chain is Glutamine--tRNA ligase (556 aa).

The short motif at 34-44 (PEPNGFLHIGH) is the 'HIGH' region element. Residues 35–37 (EPN) and 41–47 (HIGHAKA) each bind ATP. L-glutamine-binding residues include D67 and Y212. ATP contacts are provided by residues T231, 261–262 (RL), and 269–271 (MSK). A 'KMSKS' region motif is present at residues 268-272 (LMSKR).

This sequence belongs to the class-I aminoacyl-tRNA synthetase family. Monomer.

The protein localises to the cytoplasm. The enzyme catalyses tRNA(Gln) + L-glutamine + ATP = L-glutaminyl-tRNA(Gln) + AMP + diphosphate. The polypeptide is Glutamine--tRNA ligase (Colwellia psychrerythraea (strain 34H / ATCC BAA-681) (Vibrio psychroerythus)).